Here is a 617-residue protein sequence, read N- to C-terminus: Neurosecretory protein VGF (617 aa).

The signal sequence occupies residues 1–23 (MKTFTLPASVLFCFLLLIQGLGA). 3 disordered regions span residues 29–75 (PDVF…GELF), 93–204 (RPAS…ESPG), and 239–262 (SESA…THLG). Positions 48–64 (AVSRPKDDGVPEVRAAR) are enriched in basic and acidic residues. Residues 149–160 (DPEEDDRSEELE) show a composition bias toward acidic residues. Positions 182–197 (ETAAAETETRTHTLTR) are enriched in low complexity. Pyrrolidone carboxylic acid is present on Q313. A compositionally biased stretch (basic and acidic residues) spans 345–364 (RQRDLGGRELQETQQERENE). Residues 345-599 (RQRDLGGREL…EEADAEERRL (255 aa)) form a disordered region. Residues 378–397 (EDDVGEEDEEAAEAEAEAEE) are compositionally biased toward acidic residues. Residues 418–436 (AEDKRSQEEAPGHRRKDAE) show a composition bias toward basic and acidic residues. S423 bears the Phosphoserine mark. Over residues 437–452 (GAEEGGEEDDDDEEMD) the composition is skewed to acidic residues. Residues 491–501 (PPEPVPPPRAA) are compositionally biased toward pro residues. The segment covering 577 to 599 (HHPDLEAQARRAQEEADAEERRL) has biased composition (basic and acidic residues).

In terms of assembly, interacts with HSPA8 on cell membrane. Interacts with C3AR1. Interacts with C1QBP.

It is found in the secreted. The protein localises to the cytoplasmic vesicle. Its subcellular location is the secretory vesicle. In terms of biological role, secreted polyprotein that is packaged and proteolytically processed by prohormone convertases PCSK1 and PCSK2 in a cell-type-specific manner. VGF and peptides derived from its processing play many roles in neurogenesis and neuroplasticity associated with learning, memory, depression and chronic pain. Its function is as follows. Plays a role in the control of body fluid homeostasis by regulating vasopressin release. Suppresses presynaptic glutamatergic neurons connected to vasopressin neurons. Functionally, plays a role in the control of body fluid homeostasis by regulating vasopressin release. Activates GABAergic interneurons which are inhibitory neurons of the nervous system and thereby suppresses presynaptic glutamatergic neurons. Also stimulates feeding behavior in an orexin-dependent manner in the hypothalamus. Functions as a positive regulator for the activation of orexin neurons resulting in elevated gastric acid secretion and gastric emptying. Secreted multifunctional peptide that interacts with different receptors and thereby plays multiple physiological roles including modulation of energy expenditure, pain, response to stress, gastric regulation as well as lipolysis. Activates the G-protein-coupled receptor C3AR1 via a folding-upon-binding mechanism leading to enhanced lipolysis in adipocytes. Interacts with gC1qR receptor in macrophages and microglia causing increased levels of intracellular calcium and hypersensitivity. In terms of biological role, plays a role in the regulation of memory formation and depression-related behaviors potentially by influencing synaptic plasticity and neurogenesis. Induces acute and transient activation of the NTRK2/TRKB receptor and subsequent CREB phosphorylation. Also induces insulin secretion in insulinoma cells by increasing intracellular calcium mobilization. This is Neurosecretory protein VGF from Mus musculus (Mouse).